The primary structure comprises 223 residues: Lipoprotein-releasing system ATP-binding protein LolD (223 aa).

The 222-residue stretch at 2 to 223 (IQVRNLKKTF…LRDGEIVTCA (222 aa)) folds into the ABC transporter domain. Position 38–45 (38–45 (GVSGAGKT)) interacts with ATP.

It belongs to the ABC transporter superfamily. Lipoprotein translocase (TC 3.A.1.125) family. As to quaternary structure, the complex is composed of two ATP-binding proteins (LolD) and two transmembrane proteins (LolC and LolE).

The protein resides in the cell inner membrane. Functionally, part of the ABC transporter complex LolCDE involved in the translocation of mature outer membrane-directed lipoproteins, from the inner membrane to the periplasmic chaperone, LolA. Responsible for the formation of the LolA-lipoprotein complex in an ATP-dependent manner. This Syntrophus aciditrophicus (strain SB) protein is Lipoprotein-releasing system ATP-binding protein LolD.